The following is a 449-amino-acid chain: Ribulose bisphosphate carboxylase large chain (449 aa).

Position 7 is an N6,N6,N6-trimethyllysine (Lys7). Residues Asn116 and Thr166 each contribute to the substrate site. Catalysis depends on Lys168, which acts as the Proton acceptor. Lys170 is a substrate binding site. Mg(2+) is bound by residues Lys194, Asp196, and Glu197. An N6-carboxylysine modification is found at Lys194. His287 (proton acceptor) is an active-site residue. Substrate-binding residues include Arg288, His320, and Ser372.

The protein belongs to the RuBisCO large chain family. Type I subfamily. In terms of assembly, heterohexadecamer of 8 large chains and 8 small chains; disulfide-linked. The disulfide link is formed within the large subunit homodimers. Requires Mg(2+) as cofactor. In terms of processing, the disulfide bond which can form in the large chain dimeric partners within the hexadecamer appears to be associated with oxidative stress and protein turnover.

Its subcellular location is the plastid. The protein localises to the chloroplast. It catalyses the reaction 2 (2R)-3-phosphoglycerate + 2 H(+) = D-ribulose 1,5-bisphosphate + CO2 + H2O. The enzyme catalyses D-ribulose 1,5-bisphosphate + O2 = 2-phosphoglycolate + (2R)-3-phosphoglycerate + 2 H(+). RuBisCO catalyzes two reactions: the carboxylation of D-ribulose 1,5-bisphosphate, the primary event in carbon dioxide fixation, as well as the oxidative fragmentation of the pentose substrate in the photorespiration process. Both reactions occur simultaneously and in competition at the same active site. This chain is Ribulose bisphosphate carboxylase large chain, found in Aspidistra elatior (Cast-iron plant).